Here is a 128-residue protein sequence, read N- to C-terminus: Large ribosomal subunit protein bL12 (128 aa).

Belongs to the bacterial ribosomal protein bL12 family. As to quaternary structure, homodimer. Part of the ribosomal stalk of the 50S ribosomal subunit. Forms a multimeric L10(L12)X complex, where L10 forms an elongated spine to which 2 to 4 L12 dimers bind in a sequential fashion. Binds GTP-bound translation factors.

In terms of biological role, forms part of the ribosomal stalk which helps the ribosome interact with GTP-bound translation factors. Is thus essential for accurate translation. The protein is Large ribosomal subunit protein bL12 of Petrotoga mobilis (strain DSM 10674 / SJ95).